A 486-amino-acid chain; its full sequence is Arginine/agmatine antiporter (486 aa).

The next 12 helical transmembrane spans lie at 12–32 (LGAI…GIFS), 41–61 (AGAG…FFIA), 85–105 (GFGP…QIFG), 129–149 (NTIP…FIVL), 161–181 (IGTI…AFFF), 211–231 (STML…VMSA), 242–262 (ATIL…LLPF), 296–316 (IGLL…VAEI), 341–361 (VSLY…YFST), 367–387 (MLSI…AFLV), 418–438 (IWLI…LLAL), and 461–481 (EVTK…LFST).

The protein belongs to the amino acid-polyamine-organocation (APC) superfamily. Basic amino acid/polyamine antiporter (APA) (TC 2.A.3.2) family.

The protein localises to the cell inner membrane. Its function is as follows. Catalyzes the exchange of L-arginine for agmatine. The arginine uptake by the bacterium in the macrophage may be a virulence factor against the host innate immune response. In Chlamydia felis (strain Fe/C-56) (Chlamydophila felis), this protein is Arginine/agmatine antiporter (aaxC).